A 386-amino-acid polypeptide reads, in one-letter code: S-adenosylmethionine synthase (386 aa).

Glu-8 contributes to the Mg(2+) binding site. Residue His-14 coordinates ATP. Glu-42 contacts K(+). Glu-55 and Gln-98 together coordinate L-methionine. ATP contacts are provided by residues 166-168 (DGK), 234-237 (SGRF), Asp-245, 251-252 (RK), Ala-268, Lys-272, and Lys-276. Residue Asp-245 coordinates L-methionine. Position 276 (Lys-276) interacts with L-methionine.

It belongs to the AdoMet synthase family. In terms of assembly, homotetramer. It depends on Mn(2+) as a cofactor. Requires Mg(2+) as cofactor. Co(2+) serves as cofactor. The cofactor is K(+).

It is found in the cytoplasm. It carries out the reaction L-methionine + ATP + H2O = S-adenosyl-L-methionine + phosphate + diphosphate. Its pathway is amino-acid biosynthesis; S-adenosyl-L-methionine biosynthesis; S-adenosyl-L-methionine from L-methionine: step 1/1. Its function is as follows. Catalyzes the formation of S-adenosylmethionine from methionine and ATP. The reaction comprises two steps that are both catalyzed by the same enzyme: formation of S-adenosylmethionine (AdoMet) and triphosphate, and subsequent hydrolysis of the triphosphate. The chain is S-adenosylmethionine synthase (METK) from Ostreococcus tauri.